The chain runs to 356 residues: UDP-N-acetylglucosamine--N-acetylmuramyl-(pentapeptide) pyrophosphoryl-undecaprenol N-acetylglucosamine transferase (356 aa).

Residues Ser198 and Gln289 each contribute to the UDP-N-acetyl-alpha-D-glucosamine site.

This sequence belongs to the glycosyltransferase 28 family. MurG subfamily.

It is found in the cell membrane. It catalyses the reaction Mur2Ac(oyl-L-Ala-gamma-D-Glu-L-Lys-D-Ala-D-Ala)-di-trans,octa-cis-undecaprenyl diphosphate + UDP-N-acetyl-alpha-D-glucosamine = beta-D-GlcNAc-(1-&gt;4)-Mur2Ac(oyl-L-Ala-gamma-D-Glu-L-Lys-D-Ala-D-Ala)-di-trans,octa-cis-undecaprenyl diphosphate + UDP + H(+). The protein operates within cell wall biogenesis; peptidoglycan biosynthesis. Functionally, cell wall formation. Catalyzes the transfer of a GlcNAc subunit on undecaprenyl-pyrophosphoryl-MurNAc-pentapeptide (lipid intermediate I) to form undecaprenyl-pyrophosphoryl-MurNAc-(pentapeptide)GlcNAc (lipid intermediate II). The polypeptide is UDP-N-acetylglucosamine--N-acetylmuramyl-(pentapeptide) pyrophosphoryl-undecaprenol N-acetylglucosamine transferase (Streptococcus thermophilus (strain CNRZ 1066)).